A 427-amino-acid polypeptide reads, in one-letter code: Enolase (427 aa).

Glutamine 163 lines the (2R)-2-phosphoglycerate pocket. Catalysis depends on glutamate 205, which acts as the Proton donor. Aspartate 242, glutamate 285, and aspartate 312 together coordinate Mg(2+). 4 residues coordinate (2R)-2-phosphoglycerate: lysine 337, arginine 366, serine 367, and lysine 388. Lysine 337 serves as the catalytic Proton acceptor.

This sequence belongs to the enolase family. Requires Mg(2+) as cofactor.

The protein localises to the cytoplasm. It is found in the secreted. It localises to the cell surface. It catalyses the reaction (2R)-2-phosphoglycerate = phosphoenolpyruvate + H2O. Its pathway is carbohydrate degradation; glycolysis; pyruvate from D-glyceraldehyde 3-phosphate: step 4/5. Catalyzes the reversible conversion of 2-phosphoglycerate (2-PG) into phosphoenolpyruvate (PEP). It is essential for the degradation of carbohydrates via glycolysis. The sequence is that of Enolase from Rhodopseudomonas palustris (strain BisA53).